The chain runs to 923 residues: Hexokinase-3 (923 aa).

A compositionally biased stretch (polar residues) spans 1–18 (MDSIGSSGLRQGEETLSC). The interval 1-30 (MDSIGSSGLRQGEETLSCSEEGLPGPSDSS) is disordered. Hexokinase domains lie at 27-471 (SDSS…MVTA) and 477-912 (AAHR…LVTA). Residues 84–220 (HGTEQGDFVV…AYNIDVVAVV (137 aa)) are hexokinase small subdomain 1. 95–102 (ELGATGAS) serves as a coordination point for ATP. 95–104 (ELGATGASLR) provides a ligand contact to D-glucose 6-phosphate. Residues Ser-168, 185–186 (TK), and 221–222 (ND) contribute to the D-glucose site. The hexokinase large subdomain 1 stretch occupies residues 221–460 (NDTVGTMMGC…CDVSLIPSVD (240 aa)). D-glucose 6-phosphate is bound by residues Asp-222 and Thr-245. Residues Asn-248, Glu-273, and 304–307 (QRFE) contribute to the D-glucose site. D-glucose 6-phosphate is bound at residue 426-428 (GGR). ATP contacts are provided by residues 438-439 (SV) and 542-547 (DLGGTN). Residues 531-661 (DGSERGDFLA…AVELNVVAIV (131 aa)) are hexokinase small subdomain 2. 542–546 (DLGGT) is a D-glucose 6-phosphate binding site. D-glucose contacts are provided by residues 609-610 (SF), 626-627 (TK), and 662-663 (ND). A hexokinase large subdomain 2 region spans residues 662–901 (NDTVGTMMSC…CVVTFLQSED (240 aa)). Asp-663 and Thr-686 together coordinate D-glucose 6-phosphate. Position 686 (Thr-686) interacts with ATP. D-glucose-binding positions include 688-689 (TN), Glu-714, and Glu-748. ATP contacts are provided by residues 753 to 754 (GM), 790 to 794 (TKFLS), and 869 to 873 (TLYKL). D-glucose 6-phosphate contacts are provided by residues 867-869 (DGT) and Ser-903.

It belongs to the hexokinase family.

The catalysed reaction is a D-hexose + ATP = a D-hexose 6-phosphate + ADP + H(+). The enzyme catalyses D-fructose + ATP = D-fructose 6-phosphate + ADP + H(+). It carries out the reaction D-glucose + ATP = D-glucose 6-phosphate + ADP + H(+). It participates in carbohydrate metabolism; hexose metabolism. It functions in the pathway carbohydrate degradation; glycolysis; D-glyceraldehyde 3-phosphate and glycerone phosphate from D-glucose: step 1/4. Hexokinase is an allosteric enzyme inhibited by its product D-glucose 6-phosphate. Its function is as follows. Catalyzes the phosphorylation of hexose, such as D-glucose and D-fructose, to hexose 6-phosphate (D-glucose 6-phosphate and D-fructose 6-phosphate, respectively). Mediates the initial step of glycolysis by catalyzing phosphorylation of D-glucose to D-glucose 6-phosphate. In Homo sapiens (Human), this protein is Hexokinase-3.